The sequence spans 244 residues: 5-oxoprolinase subunit A (244 aa).

It belongs to the LamB/PxpA family. In terms of assembly, forms a complex composed of PxpA, PxpB and PxpC.

The catalysed reaction is 5-oxo-L-proline + ATP + 2 H2O = L-glutamate + ADP + phosphate + H(+). In terms of biological role, catalyzes the cleavage of 5-oxoproline to form L-glutamate coupled to the hydrolysis of ATP to ADP and inorganic phosphate. This is 5-oxoprolinase subunit A from Salmonella choleraesuis (strain SC-B67).